A 150-amino-acid polypeptide reads, in one-letter code: Large ribosomal subunit protein bL9 (150 aa).

It belongs to the bacterial ribosomal protein bL9 family.

In terms of biological role, binds to the 23S rRNA. The protein is Large ribosomal subunit protein bL9 of Shewanella halifaxensis (strain HAW-EB4).